A 443-amino-acid polypeptide reads, in one-letter code: ATP-dependent protease ATPase subunit HslU (443 aa).

ATP-binding positions include Ile-18, 60–65 (GVGKTE), Asp-256, Glu-321, and Arg-393.

The protein belongs to the ClpX chaperone family. HslU subfamily. A double ring-shaped homohexamer of HslV is capped on each side by a ring-shaped HslU homohexamer. The assembly of the HslU/HslV complex is dependent on binding of ATP.

It is found in the cytoplasm. Functionally, ATPase subunit of a proteasome-like degradation complex; this subunit has chaperone activity. The binding of ATP and its subsequent hydrolysis by HslU are essential for unfolding of protein substrates subsequently hydrolyzed by HslV. HslU recognizes the N-terminal part of its protein substrates and unfolds these before they are guided to HslV for hydrolysis. The sequence is that of ATP-dependent protease ATPase subunit HslU from Pasteurella multocida (strain Pm70).